The following is a 283-amino-acid chain: Gap junction beta-1 protein (283 aa).

The Cytoplasmic portion of the chain corresponds to 1-22 (MNWTGLYTLLSGVNRHSTAIGR). A helical membrane pass occupies residues 23–45 (VWLSVIFIFRIMVLVVAAESVWG). Residues 46–75 (DEKSSFICNTLQPGCNSVCYDQFFPISHVR) lie on the Extracellular side of the membrane. Residues 76–95 (LWSLQLILVSTPALLVAMHV) traverse the membrane as a helical segment. Over 96–130 (AHQQHIEKKMLRLEGHGDPLHLEEVKRHKVHISGT) the chain is Cytoplasmic. Residues 131–153 (LWWTYVISVVFRLLFEAVFMYVF) traverse the membrane as a helical segment. At 154 to 191 (YLLYPGYAMVRLVKCDVYPCPNTVDCFVSRPTEKTVFT) the chain is on the extracellular side. Residues 192–214 (VFMLAASGICIILNVAEVVYLII) form a helical membrane-spanning segment. Topologically, residues 215–283 (RACARRAQRR…AEKSDRCSAC (69 aa)) are cytoplasmic. A phosphoserine mark is found at serine 233, serine 258, serine 266, and serine 277.

The protein belongs to the connexin family. Beta-type (group I) subfamily. A connexon is composed of a hexamer of connexins. Interacts with CNST.

Its subcellular location is the cell membrane. It localises to the cell junction. It is found in the gap junction. In terms of biological role, one gap junction consists of a cluster of closely packed pairs of transmembrane channels, the connexons, through which materials of low MW diffuse from one cell to a neighboring cell. This Homo sapiens (Human) protein is Gap junction beta-1 protein (GJB1).